We begin with the raw amino-acid sequence, 322 residues long: N-acetyl-gamma-glutamyl-phosphate reductase (322 aa).

Residue Cys132 is part of the active site.

It belongs to the NAGSA dehydrogenase family. Type 1 subfamily.

Its subcellular location is the cytoplasm. It catalyses the reaction N-acetyl-L-glutamate 5-semialdehyde + phosphate + NADP(+) = N-acetyl-L-glutamyl 5-phosphate + NADPH + H(+). It functions in the pathway amino-acid biosynthesis; L-arginine biosynthesis; N(2)-acetyl-L-ornithine from L-glutamate: step 3/4. Catalyzes the NADPH-dependent reduction of N-acetyl-5-glutamyl phosphate to yield N-acetyl-L-glutamate 5-semialdehyde. The polypeptide is N-acetyl-gamma-glutamyl-phosphate reductase (Parabacteroides distasonis (strain ATCC 8503 / DSM 20701 / CIP 104284 / JCM 5825 / NCTC 11152)).